A 137-amino-acid chain; its full sequence is MLQPKRTKFRKQFKGRIHGVAKGGTELNFGEFGLKALEPERVTARQIEAARRALTRHMKRAGRVWIRVFPDVPVTSKPTEVRMGKGKGAPEYWAAKVKPGRIMFEIDGVPVDLAREALTLAAAKLPIKTRFIQRIAE.

The protein belongs to the universal ribosomal protein uL16 family. Part of the 50S ribosomal subunit.

Functionally, binds 23S rRNA and is also seen to make contacts with the A and possibly P site tRNAs. The protein is Large ribosomal subunit protein uL16 of Azorhizobium caulinodans (strain ATCC 43989 / DSM 5975 / JCM 20966 / LMG 6465 / NBRC 14845 / NCIMB 13405 / ORS 571).